The primary structure comprises 464 residues: Asparagine--tRNA ligase (464 aa).

Belongs to the class-II aminoacyl-tRNA synthetase family. Homodimer.

The protein resides in the cytoplasm. It catalyses the reaction tRNA(Asn) + L-asparagine + ATP = L-asparaginyl-tRNA(Asn) + AMP + diphosphate + H(+). This is Asparagine--tRNA ligase from Cytophaga hutchinsonii (strain ATCC 33406 / DSM 1761 / CIP 103989 / NBRC 15051 / NCIMB 9469 / D465).